The primary structure comprises 346 residues: MSLCQFVSSISDCRITQALIYGVLFVGVYKITTFTLSVGSLLVDLFVLPAVDFKKYGAKQGKWAVVTGASDGIGKEYAYQLASRGLNVVLISRTLSKLELIATEIETKYKVSTEVIAFDASTDNDANYAKILHTVSNLPVTVLVNNVGQSHSIPVPFLETEDKELRDIITINNTVTLKITQAVAPVIADTVAKENKKVKGLILTMGSFGGLLPTPYLATYSGSKSFLQAWSSALAGELKPQGIDVQLVISYLVTSAMSKIRRSSASIPNPKNFVTSVLNTAGRRCGAQERFATTTPYWTHALMHFGIENTVGVYSKFANSLNFSMHKSIRVRALKKAARANATKTD.

A helical membrane pass occupies residues 19-39 (LIYGVLFVGVYKITTFTLSVG). 7 residues coordinate NADP(+): valine 65, aspartate 119, asparagine 146, tyrosine 220, lysine 224, valine 253, and serine 255. Residue tyrosine 220 is the Proton donor of the active site. Lysine 224 (lowers pKa of active site Tyr) is an active-site residue.

Belongs to the short-chain dehydrogenases/reductases (SDR) family.

Its subcellular location is the endoplasmic reticulum membrane. It carries out the reaction a very-long-chain (3R)-3-hydroxyacyl-CoA + NADP(+) = a very-long-chain 3-oxoacyl-CoA + NADPH + H(+). It functions in the pathway lipid metabolism; fatty acid biosynthesis. Component of the microsomal membrane bound fatty acid elongation system, which produces the 26-carbon very long-chain fatty acids (VLCFA) from palmitate. Catalyzes the reduction of the 3-ketoacyl-CoA intermediate that is formed in each cycle of fatty acid elongation. VLCFAs serve as precursors for ceramide and sphingolipids. In Debaryomyces hansenii (strain ATCC 36239 / CBS 767 / BCRC 21394 / JCM 1990 / NBRC 0083 / IGC 2968) (Yeast), this protein is Very-long-chain 3-oxoacyl-CoA reductase.